The primary structure comprises 228 residues: SPbeta prophage-derived uncharacterized protein YomL (228 aa).

Residues 1 to 28 (MRKKRVITCVMAASLTLGSLLPAGYATA) form the signal peptide.

The sequence is that of SPbeta prophage-derived uncharacterized protein YomL (yomL) from Bacillus subtilis (strain 168).